The primary structure comprises 708 residues: Ubiquitin thioesterase ZRANB1 (708 aa).

The RanBP2-type 1 zinc-finger motif lies at 3 to 33 (ERGIKWACEYCTYENWPSAIKCTMCRAQRPS). Residues Cys10, Cys13, Cys24, and Cys27 each coordinate Zn(2+). A disordered region spans residues 38 to 73 (TEDPFKSGSSDVGRDWDPSSTEGGSSPLICPDSSAR). RanBP2-type zinc fingers lie at residues 84 to 113 (NANK…QRRT) and 149 to 178 (RTQH…PRPN). Residues Cys90, Cys93, Cys104, Cys107, Cys155, Cys158, Cys169, and Cys172 each contribute to the Zn(2+) site. The segment at 200–223 (RARWRGSCSSGNSQRRSPPTMKRD) is disordered. A compositionally biased stretch (polar residues) spans 206 to 216 (SCSSGNSQRRS). ANK repeat units follow at residues 260-290 (KKTD…SGGD) and 313-340 (YTLV…QQAA). The OTU domain maps to 432–592 (LYALWNRTAG…RGHFSALVAM (161 aa)). Residue Cys443 is the Nucleophile of the active site. His585 serves as the catalytic Proton acceptor.

The protein belongs to the peptidase C64 family. In terms of assembly, interacts with TRAF6. Interacts with APC.

It is found in the cytoplasm. It localises to the nucleus. It carries out the reaction Thiol-dependent hydrolysis of ester, thioester, amide, peptide and isopeptide bonds formed by the C-terminal Gly of ubiquitin (a 76-residue protein attached to proteins as an intracellular targeting signal).. Its function is as follows. Ubiquitin thioesterase, which specifically hydrolyzes 'Lys-29'-linked and 'Lys-33'-linked diubiquitin. Also cleaves 'Lys-63'-linked chains, but with 40-fold less efficiency compared to 'Lys-29'-linked ones. Positive regulator of the Wnt signaling pathway that deubiquitinates APC protein, a negative regulator of Wnt-mediated transcription. Acts as a regulator of autophagy by mediating deubiquitination of PIK3C3/VPS34, thereby promoting autophagosome maturation. Plays a role in the regulation of cell morphology and cytoskeletal organization. Required in the stress fiber dynamics and cell migration. The protein is Ubiquitin thioesterase ZRANB1 of Bos taurus (Bovine).